We begin with the raw amino-acid sequence, 297 residues long: N-acetylmuramic acid 6-phosphate etherase (297 aa).

Residues 55–218 enclose the SIS domain; the sequence is AAKRYSKGGR…STGVMIKQGK (164 aa). Glutamate 83 functions as the Proton donor in the catalytic mechanism. Glutamate 114 is an active-site residue.

The protein belongs to the GCKR-like family. MurNAc-6-P etherase subfamily. In terms of assembly, homodimer.

The catalysed reaction is N-acetyl-D-muramate 6-phosphate + H2O = N-acetyl-D-glucosamine 6-phosphate + (R)-lactate. The protein operates within amino-sugar metabolism; N-acetylmuramate degradation. Specifically catalyzes the cleavage of the D-lactyl ether substituent of MurNAc 6-phosphate, producing GlcNAc 6-phosphate and D-lactate. In Lactobacillus gasseri (strain ATCC 33323 / DSM 20243 / BCRC 14619 / CIP 102991 / JCM 1131 / KCTC 3163 / NCIMB 11718 / NCTC 13722 / AM63), this protein is N-acetylmuramic acid 6-phosphate etherase.